An 881-amino-acid polypeptide reads, in one-letter code: Probable alpha/beta-glucosidase agdC (881 aa).

The N-terminal stretch at 1–14 (MLRSLLLLAPLVGA) is a signal peptide. N-linked (GlcNAc...) asparagine glycans are attached at residues Asn171, Asn293, and Asn373. The active-site Nucleophile is the Asp422. Glu425 is an active-site residue. Positions 440 to 485 (YSRDNDLPPAAPPVRPSNPRPLPGFPGDFQPSSSSKRSTKGSKVGL) are disordered. Residues 448 to 463 (PAAPPVRPSNPRPLPG) show a composition bias toward pro residues. A glycan (N-linked (GlcNAc...) asparagine) is linked at Asn506. The active-site Proton donor is Asp571. N-linked (GlcNAc...) asparagine glycans are attached at residues Asn572, Asn608, and Asn742.

It belongs to the glycosyl hydrolase 31 family.

The protein localises to the secreted. It catalyses the reaction Hydrolysis of terminal, non-reducing (1-&gt;4)-linked alpha-D-glucose residues with release of alpha-D-glucose.. It carries out the reaction Hydrolysis of terminal, non-reducing beta-D-glucosyl residues with release of beta-D-glucose.. Its function is as follows. Glucosidase involved in the degradation of cellulosic biomass. Has both alpha- and beta-glucosidase activity. This chain is Probable alpha/beta-glucosidase agdC (agdC), found in Neosartorya fischeri (strain ATCC 1020 / DSM 3700 / CBS 544.65 / FGSC A1164 / JCM 1740 / NRRL 181 / WB 181) (Aspergillus fischerianus).